The sequence spans 548 residues: Alpha-1,3-mannosyl-glycoprotein 4-beta-N-acetylglucosaminyltransferase B (548 aa).

The Cytoplasmic portion of the chain corresponds to 1–7 (MRLRNGT). A helical; Signal-anchor for type II membrane protein membrane pass occupies residues 8 to 28 (FLTLLLFCLCAFLSLSWYAAL). Residues 29–548 (SGQKGDVVDI…LSEIFLKKAD (520 aa)) are Lumenal-facing. Positions 36–83 (VDIYQREFLALRDRLHAAEQESLKRSKELNLVLEEIKRAVSERQALRD) form a coiled coil. N-linked (GlcNAc...) asparagine glycosylation is found at Asn-87 and Asn-103.

Belongs to the glycosyltransferase 54 family. In terms of assembly, interacts with SLC35A3. The cofactor is a divalent metal cation. Post-translationally, N-glycosylated.

The protein resides in the golgi apparatus membrane. The enzyme catalyses N(4)-{beta-D-GlcNAc-(1-&gt;2)-alpha-D-Man-(1-&gt;3)-[beta-D-GlcNAc-(1-&gt;2)-alpha-D-Man-(1-&gt;6)]-beta-D-Man-(1-&gt;4)-beta-D-GlcNAc-(1-&gt;4)-beta-D-GlcNAc}-L-asparaginyl-[protein] + UDP-N-acetyl-alpha-D-glucosamine = N(4)-{beta-D-GlcNAc-(1-&gt;2)-[beta-D-GlcNAc-(1-&gt;4)]-alpha-D-Man-(1-&gt;3)-[beta-D-GlcNAc-(1-&gt;2)-alpha-D-Man-(1-&gt;6)]-beta-D-Man-(1-&gt;4)-beta-D-GlcNAc-(1-&gt;4)-beta-D-GlcNAc}-L-asparaginyl-[protein] + UDP + H(+). It catalyses the reaction an N(4)-{beta-D-GlcNAc-(1-&gt;2)-alpha-D-Man-(1-&gt;3)-[alpha-D-Man-(1-&gt;6)]-beta-D-Man-(1-&gt;4)-beta-D-GlcNAc-(1-&gt;4)-beta-D-GlcNAc}-L-asparaginyl-[protein] + UDP-N-acetyl-alpha-D-glucosamine = an N(4)-{beta-D-GlcNAc-(1-&gt;2)-[beta-D-GlcNAc-(1-&gt;4)]-alpha-D-Man-(1-&gt;3)-[alpha-D-Man-(1-&gt;6)]-beta-D-Man-(1-&gt;4)-beta-D-GlcNAc-(1-&gt;4)-beta-D-GlcNAc}-L-asparaginyl-[protein] + UDP + H(+). The catalysed reaction is an N(4)-{beta-D-GlcNAc-(1-&gt;2)-alpha-D-Man-(1-&gt;3)-[beta-D-GlcNAc-(1-&gt;2)-[beta-D-GlcNAc-(1-&gt;6)]-alpha-D-Man-(1-&gt;6)]-beta-D-Man-(1-&gt;4)-beta-D-GlcNAc-(1-&gt;4)-beta-D-GlcNAc}-L-asparaginyl-[protein] + UDP-N-acetyl-alpha-D-glucosamine = an N(4)-{beta-D-GlcNAc-(1-&gt;2)-[beta-D-GlcNAc-(1-&gt;4)]-alpha-D-Man-(1-&gt;3)-[beta-D-GlcNAc-(1-&gt;2)-[beta-D-GlcNAc-(1-&gt;6)]-alpha-D-Man-(1-&gt;6)]-beta-D-Man-(1-&gt;4)-beta-D-GlcNAc-(1-&gt;4)-beta-D-GlcNAc}-L-asparaginyl-[protein] + UDP + H(+). It carries out the reaction an N(4)-{beta-D-GlcNAc-(1-&gt;2)-alpha-D-Man-(1-&gt;3)-[beta-D-GlcNAc-(1-&gt;2)-alpha-D-Man-(1-&gt;6)]-beta-D-Man-(1-&gt;4)-beta-D-GlcNAc-(1-&gt;4)-[alpha-L-Fuc-(1-&gt;6)]-beta-D-GlcNAc}-L-asparaginyl-[protein] + UDP-N-acetyl-alpha-D-glucosamine = N(4)-{beta-D-GlcNAc-(1-&gt;2)-[beta-D-GlcNAc-(1-&gt;4)]-alpha-D-Man-(1-&gt;3)-[beta-D-GlcNAc-(1-&gt;2)-alpha-D-Man-(1-&gt;6)]-beta-D-Man-(1-&gt;4)-beta-D-GlcNAc-(1-&gt;4)-[alpha-L-Fuc-(1-&gt;6)]-beta-D-GlcNAc}-asparaginyl-[protein] + UDP + H(+). The enzyme catalyses an N(4)-{beta-D-GlcNAc-(1-&gt;2)-alpha-D-Man-(1-&gt;3)-[beta-D-Gal-(1-&gt;4)-beta-D-GlcNAc-(1-&gt;2)-alpha-D-Man-(1-&gt;6)]-beta-D-Man-(1-&gt;4)-beta-D-GlcNAc-(1-&gt;4)-beta-D-GlcNAc}-L-asparaginyl-[protein] + UDP-N-acetyl-alpha-D-glucosamine = an N(4)-{beta-D-GlcNAc-(1-&gt;2)-[beta-D-GlcNAc-(1-&gt;4)]-alpha-D-Man-(1-&gt;3)-[beta-D-Gal-(1-&gt;4)-beta-D-GlcNAc-(1-&gt;2)-alpha-D-Man-(1-&gt;6)]-beta-D-Man-(1-&gt;4)-beta-D-GlcNAc-(1-&gt;4)-beta-D-GlcNAc}-L-asparaginyl-[protein] + UDP + H(+). It catalyses the reaction N(4)-{beta-D-GlcNAc-(1-&gt;2)-alpha-D-Man-(1-&gt;3)-[alpha-D-Man-(1-&gt;3)-{alpha-D-Man-(1-&gt;6)}-alpha-D-Man-(1-&gt;6)]-beta-D-Man-(1-&gt;4)-beta-D-GlcNAc-(1-&gt;4)-beta-D-GlcNAc}-asparaginyl-[protein] + UDP-N-acetyl-alpha-D-glucosamine = N(4)-{beta-D-GlcNAc-(1-&gt;2)-[beta-D-GlcNAc-(1-&gt;4)]-alpha-D-Man-(1-&gt;3)-[alpha-D-Man-(1-&gt;3)-{alpha-D-Man-(1-&gt;6)}-alpha-D-Man-(1-&gt;6)]-beta-D-Man-(1-&gt;4)-beta-D-GlcNAc-(1-&gt;4)-beta-D-GlcNAc}-asparaginyl-[protein] + UDP + H(+). The catalysed reaction is N(4)-{beta-D-GlcNAc-(1-&gt;2)-alpha-D-Man-(1-&gt;3)-beta-D-Man-(1-&gt;4)-beta-D-GlcNAc-(1-&gt;4)-beta-D-GlcNAc}-asparaginyl-[protein] + UDP-N-acetyl-alpha-D-glucosamine = N(4)-{beta-D-GlcNAc-(1-&gt;2)-[beta-D-GlcNAc-(1-&gt;4)]-alpha-D-Man-(1-&gt;3)-beta-D-Man-(1-&gt;4)-beta-D-GlcNAc-(1-&gt;4)-beta-D-GlcNAc}-asparaginyl-[protein] + UDP + H(+). It participates in protein modification; protein glycosylation. Its function is as follows. Glycosyltransferase that catalyzes the transfer of GlcNAc from UDP-GlcNAc to the GlcNAcbeta1-2Manalpha1-3 arm of the core structure of N-linked glycans through a beta1-4 linkage and participates in the production of tri- and tetra-antennary N-linked sugar chains. Prefers complex-type N-glycans over hybrid-types. Has lower affinities for donors or acceptors than MGAT4A, suggesting that, under physiological conditions, it is not the main contributor in N-glycan biosynthesis. This chain is Alpha-1,3-mannosyl-glycoprotein 4-beta-N-acetylglucosaminyltransferase B, found in Mus musculus (Mouse).